The sequence spans 311 residues: MRVCYFVLVPSVALAVIATESSETSGTIVHVFPLRDVADHRNDALINRALRAQTALDDDEERWPFGPSAVEALIETIDRHGRVSLNDEAKMKKVVRTWKKLIERDDLIGEIGKHYFEAPGPLHDTYDEALATRLVTTYSDRGVARAILHTRPSDPLSKKAGQAHRLEEAVASLWKGRGYTSDNVVSSIATGHDVDFFAPTAFTFLVKCVESEDDANNAIFEYFGSNPSRYFSAVLHAMEKPDADSRVLESSKKWMFQCYAQKQFPTPVFERTLAAYQSEDYAIRGARNHYEKLSLSQIEELVEEYSRIYSV.

A signal peptide spans 1 to 15 (MRVCYFVLVPSVALA). Residues 48–62 (RALRAQTALDDDEER) carry the RxLR-dEER motif. 2 WY domain regions span residues 127 to 209 (DEAL…VKCV) and 210 to 311 (ESED…IYSV).

This sequence belongs to the RxLR effector family. In terms of assembly, monomer. Interacts with defense protein RPP1 from several ecotypes including RPP1-NdA, RPP1-WsB, RPP1-EstA and RPP1-ZdrA, via their leucine-rich repeats (LLRs).

It is found in the secreted. The protein localises to the host cytoplasm. Functionally, secreted effector that acts as an elicitor of hypersensitive response (HR) specifically on plants carrying both defense protein RPP1 from several ecotypes including RPP1-NdA, RPP1-WsB, RPP1-EstA and RPP1-ZdrA. In Hyaloperonospora arabidopsidis (strain Emoy2) (Downy mildew agent), this protein is Avirulence protein ATR1.